Reading from the N-terminus, the 1983-residue chain is Nonribosomal peptide synthetase verP (1983 aa).

The tract at residues 11-405 (FAQAASRCPD…FRGRKDRTVK (395 aa)) is adenylation 1. The Carrier 1 domain maps to 526-602 (DRHLDTLLTV…DVAPLITSRA (77 aa)). The residue at position 563 (serine 563) is an O-(pantetheine 4'-phosphoryl)serine. The interval 769 to 1047 (ETDELTVVLT…GQHFKHALYS (279 aa)) is condensation 1. Positions 1089–1469 (QVMGQFPSLI…GRIDRLVKLR (381 aa)) are adenylation 2. A Carrier 2 domain is found at 1584 to 1662 (ITRPKIEDKL…DQINMVRALL (79 aa)). Serine 1622 bears the O-(pantetheine 4'-phosphoryl)serine mark. Residues 1652 to 1976 (KDQINMVRAL…GGLEHPLFEC (325 aa)) form a condensation 2 region.

This sequence belongs to the NRP synthetase family.

Its pathway is mycotoxin biosynthesis. In terms of biological role, nonribosomal peptide synthetase; part of the gene cluster that mediates the biosynthesis of 11'-deoxyverticillin A, one of the dimeric epipolythiodioxopiperazines (ETPs) from the verticillin family that act as mycotoxins. 11'-deoxyverticillin A is required for normal conidiation. The nonribosomal peptide synthetase verP is speculated to be responsible for condensation of amino acids to form the carbon skeleton of verticillin, whereas the cluster-specific tailoring enzymes are involved in further modifications leading to the production of 11'-deoxyverticillin A. The protein is Nonribosomal peptide synthetase verP of Clonostachys rogersoniana.